Consider the following 289-residue polypeptide: tRNA pseudouridine synthase A (289 aa).

The active-site Nucleophile is the Asp67. Tyr125 contacts substrate.

Belongs to the tRNA pseudouridine synthase TruA family. In terms of assembly, homodimer.

It carries out the reaction uridine(38/39/40) in tRNA = pseudouridine(38/39/40) in tRNA. Formation of pseudouridine at positions 38, 39 and 40 in the anticodon stem and loop of transfer RNAs. The sequence is that of tRNA pseudouridine synthase A from Prochlorococcus marinus (strain MIT 9211).